A 142-amino-acid chain; its full sequence is gSG7 salivary protein (142 aa).

Residues 1–26 form the signal peptide; it reads MAVRMTVILPLAMALICLMQAEPATA. Disulfide bonds link C84–C139 and C107–C117.

In terms of assembly, associates with activated host C3-convertase complex C3bBb (C3-CFB). Interacts with host properdin (CFP), a regulator of the alternate pathway of complement. In terms of tissue distribution, female salivary gland (at protein level).

The protein localises to the secreted. Its function is as follows. Salivary protein that potently inhibits the alternative pathway of complement system activation in the host while having no inhibitory effect on the classical or lectin pathways. Binds and stabilizes activated host C3-convertase complex C3bBb (C3-CFB) and inhibits its convertase activity. Enhances accumulation of C3bBb on immobilized properdin. The sequence is that of gSG7 salivary protein from Anopheles albimanus (New world malaria mosquito).